Here is a 552-residue protein sequence, read N- to C-terminus: MPSARLQQQFIRLWQCCEGKSQDTTLNELAALLSCSRRHMRTLLNTMQDRGWLTWEAEVGRGKRSRLTFLYTGLALQQQRAEDLLEQDRIDQLVQLVGDKATVRQMLVSHLGRSFRQGRHILRVLYYRPLRNLLPGSALRRSETHIARQIFSSLTRINEENGELEADIAHHWQQISPLHWRFFLRPGVHFHHGRELEMDDVIASLKRINTLPLYSHIADIVSPTPWTLDIHLTQPDRWLPLLLGQVPAMILPREWETLSNFASHPIGTGPYAVIRNSTNQLKIQAFDDFFGYRALIDEVNVWVLPEIADEPAGGLMLKGPQGEEKEIESRLEEGCYYLLFDSRTHRGANQQVRDWVSYVLSPTNLVYFAEEQYQQLWFPAYGLLPRWHHARTITSEKPAGLESLTLTFYQDHSEHRVIAGIMQQILASHQVTLEIKEISYDQWHEGEIESDIWLNSANFTLPLDFSLFAHLCEVPLLQHCIPIDWQVDAARWRNGEMNLANWCQQLVASKAMVPLIHHWLIIQGQRSMRGLRMNTLGWFDFKSAWFAPPDPE.

The 116-residue stretch at 1–116 folds into the HTH marR-type domain; it reads MPSARLQQQF…LVSHLGRSFR (116 aa). The H-T-H motif DNA-binding region spans 26–49; it reads LNELAALLSCSRRHMRTLLNTMQD. Residues 163 to 492 are solute-binding; the sequence is ELEADIAHHW…IDWQVDAARW (330 aa).

In terms of biological role, activates the small RNA gene sgrS under glucose-phosphate stress conditions as well as yfdZ. Represses its own transcription under both stress and non-stress conditions. Might act as a sensor of the intracellular accumulation of phosphoglucose by binding these molecules in its C-terminal solute-binding domain. The sequence is that of HTH-type transcriptional regulator SgrR from Escherichia coli O157:H7.